The sequence spans 206 residues: Elongation factor Ts (206 aa).

The involved in Mg(2+) ion dislocation from EF-Tu stretch occupies residues 81-84 (TDFV).

Belongs to the EF-Ts family.

It is found in the cytoplasm. Its function is as follows. Associates with the EF-Tu.GDP complex and induces the exchange of GDP to GTP. It remains bound to the aminoacyl-tRNA.EF-Tu.GTP complex up to the GTP hydrolysis stage on the ribosome. This is Elongation factor Ts from Maridesulfovibrio salexigens (strain ATCC 14822 / DSM 2638 / NCIMB 8403 / VKM B-1763) (Desulfovibrio salexigens).